Here is a 241-residue protein sequence, read N- to C-terminus: MGQKVNPIGLRLGINRTWDSRWFANTGEYGKLLHEDIKIRKYLEKELKQAAISKVVIERPHKKCRVTIHAARPGLIIGKKGADIEKLRKKLMEMTKSETHLNIVEVRKPEIDATLVAQSIAQQLERRIAFRRAMKRAVQSAMRLGAEGIRINCSGRLGGAEIARMEWYREGRVPLHTLRADVDYGTAEANTAYGICGVKVWVFKGEILEHDPMASERRATEGDAAHGGGGDRERGRRRENA.

Positions 39–107 (IRKYLEKELK…ETHLNIVEVR (69 aa)) constitute a KH type-2 domain. Positions 214–241 (ASERRATEGDAAHGGGGDRERGRRRENA) are disordered.

The protein belongs to the universal ribosomal protein uS3 family. In terms of assembly, part of the 30S ribosomal subunit. Forms a tight complex with proteins S10 and S14.

Binds the lower part of the 30S subunit head. Binds mRNA in the 70S ribosome, positioning it for translation. This is Small ribosomal subunit protein uS3 from Mesorhizobium japonicum (strain LMG 29417 / CECT 9101 / MAFF 303099) (Mesorhizobium loti (strain MAFF 303099)).